The primary structure comprises 410 residues: Transcription factor Dp-1 (410 aa).

Lys3 bears the N6-acetyllysine mark. Position 23 is a phosphoserine (Ser23). The span at 73-100 (SNTLVVGSPHTPSTHFASQNQPSDSSPW) shows a compositional bias: polar residues. A disordered region spans residues 73–116 (SNTLVVGSPHTPSTHFASQNQPSDSSPWSAGKRNRKGEKNGKGL). Residues 104–116 (KRNRKGEKNGKGL) are compositionally biased toward basic residues. The interaction with CEBPA stretch occupies residues 105-127 (RNRKGEKNGKGLRHFSMKVCEKV). The DNA-binding element occupies 113-195 (GKGLRHFSMK…KKEIKWIGLP (83 aa)). Residues 161-195 (DQKNIRRRVYDALNVLMAMNIISKEKKEIKWIGLP) carry the DEF box motif. A dimerization region spans residues 204–277 (NLEVERQRRL…KKTVIDCSIS (74 aa)). Positions 211-327 (RRLERIKQKQ…DLKMARSLVP (117 aa)) are enhances binding of RB protein to E2F. The segment at 214-246 (ERIKQKQSQLQELILQQIAFKNLVQRNRHAEQQ) is DCB1. The tract at residues 259-315 (LPFIIVNTSKKTVIDCSISNDKFEYLFNFDNTFEIHDDIEVLKRMGMACGLESGSCS) is DCB2. A disordered region spans residues 370–410 (GMLATSSNGSQYSGSRVETPVSYVGEDDEEDDDFNENDEDD). Over residues 373–385 (ATSSNGSQYSGSR) the composition is skewed to polar residues. A compositionally biased stretch (acidic residues) spans 394-410 (GEDDEEDDDFNENDEDD).

It belongs to the E2F/DP family. As to quaternary structure, component of the E2F:DP transcription factor complex. Forms heterodimers with E2F family members. The complex can interact with hypophosphorylated retinoblastoma protein RB1 and related proteins (RBL1 and RBL2) that inhibit the E2F transactivation domain. This repression involves recruitment of histone deacetylase (HDAC). During the cell cycle, from mid-to-late G1 phase, RB family members become phosphorylated, detach from the DRTF1/E2F complex to render E2F transcriptionally active. Viral oncoproteins, notably E1A, T-antigen and HPV E7, are capable of sequestering RB protein, thus releasing the active complex. Part of the E2F6.com-1 complex in G0 phase is composed of E2F6, MGA, MAX, TFDP1, CBX3, BAT8, EUHMTASE1, RING1, RNF2, MBLR, L3MBTL2 YAF2. Component of the DREAM complex (also named LINC complex) at least composed of E2F4, E2F5, LIN9, LIN37, LIN52, LIN54, MYBL1, MYBL2, RBL1, RBL2, RBBP4, TFDP1 and TFDP2. The complex exists in quiescent cells where it represses cell cycle-dependent genes. It dissociates in S phase when LIN9, LIN37, LIN52 and LIN54 form a subcomplex that binds to MYBL2. The complex TFDP1:E2F1 interacts with CEBPA; the interaction prevents CEBPA binding to target gene promoters and represses its transcriptional activity. Post-translationally, phosphorylation by E2F1-bound cyclin A-CDK2, in the S phase, inhibits E2F-mediated DNA binding and transactivation. In terms of processing, ubiquitinated by the BCR(KBTBD5) complex, leading to its subsequent degradation. As to expression, highest levels in muscle. Also expressed in brain, placenta, liver and kidney. Lower levels in lung and pancreas. Not detected in heart.

The protein localises to the nucleus. It localises to the cytoplasm. Functionally, can stimulate E2F-dependent transcription. Binds DNA cooperatively with E2F family members through the E2 recognition site, 5'-TTTC[CG]CGC-3', found in the promoter region of a number of genes whose products are involved in cell cycle regulation or in DNA replication. The E2F1:DP complex appears to mediate both cell proliferation and apoptosis. Blocks adipocyte differentiation by repressing CEBPA binding to its target gene promoters. This Homo sapiens (Human) protein is Transcription factor Dp-1 (TFDP1).